We begin with the raw amino-acid sequence, 641 residues long: Soluble starch synthase 1, chloroplastic/amyloplastic (641 aa).

The N-terminal 113 residues, 1–113 (MATAAGMGIG…DSIDKTIFVA (113 aa)), are a transit peptide targeting the chloroplast. Residues 62 to 96 (TFLVPTSTPPAPTQSPAPAPTPPPLPDSGVGEIEP) form a disordered region. Positions 68 to 87 (STPPAPTQSPAPAPTPPPLP) are enriched in pro residues. Position 147 (Lys147) interacts with ADP-alpha-D-glucose.

The protein belongs to the glycosyltransferase 1 family. Bacterial/plant glycogen synthase subfamily.

Its subcellular location is the plastid. It localises to the chloroplast. It is found in the amyloplast. It catalyses the reaction [(1-&gt;4)-alpha-D-glucosyl](n) + ADP-alpha-D-glucose = [(1-&gt;4)-alpha-D-glucosyl](n+1) + ADP + H(+). It functions in the pathway glycan biosynthesis; starch biosynthesis. This chain is Soluble starch synthase 1, chloroplastic/amyloplastic, found in Oryza sativa subsp. indica (Rice).